Here is a 98-residue protein sequence, read N- to C-terminus: NADH-ubiquinone oxidoreductase chain 4L (98 aa).

Helical transmembrane passes span methionine 1 to phenylalanine 21, leucine 26 to leucine 46, and alanine 59 to valine 79.

Belongs to the complex I subunit 4L family. As to quaternary structure, core subunit of respiratory chain NADH dehydrogenase (Complex I) which is composed of 45 different subunits.

The protein localises to the mitochondrion inner membrane. It carries out the reaction a ubiquinone + NADH + 5 H(+)(in) = a ubiquinol + NAD(+) + 4 H(+)(out). Core subunit of the mitochondrial membrane respiratory chain NADH dehydrogenase (Complex I) which catalyzes electron transfer from NADH through the respiratory chain, using ubiquinone as an electron acceptor. Part of the enzyme membrane arm which is embedded in the lipid bilayer and involved in proton translocation. The chain is NADH-ubiquinone oxidoreductase chain 4L (mt-nd4l) from Danio rerio (Zebrafish).